A 149-amino-acid polypeptide reads, in one-letter code: Large ribosomal subunit protein uL15 (149 aa).

A disordered region spans residues 1 to 52 (MSELLKLHHLRPAPGSNKAKIRKGRGEASKGKTAGRGTKGTKARSTVPAGFE).

It belongs to the universal ribosomal protein uL15 family. Part of the 50S ribosomal subunit.

Binds to the 23S rRNA. This chain is Large ribosomal subunit protein uL15, found in Thermobifida fusca (strain YX).